A 183-amino-acid polypeptide reads, in one-letter code: Ubiquitin-conjugating enzyme E2 6 (183 aa).

In terms of domain architecture, UBC core spans 1 to 148 (MASPSKRREM…VKEYCEKYAK (148 aa)). Catalysis depends on Cys85, which acts as the Glycyl thioester intermediate. Positions 148–183 (KPEEILSDDDDDDSMSEDGSDSDDDDDDEIVGKADP) are disordered. Positions 152-176 (ILSDDDDDDSMSEDGSDSDDDDDDE) are enriched in acidic residues.

The protein belongs to the ubiquitin-conjugating enzyme family. Expressed in roots, petals, sepals and silique walls.

It catalyses the reaction S-ubiquitinyl-[E1 ubiquitin-activating enzyme]-L-cysteine + [E2 ubiquitin-conjugating enzyme]-L-cysteine = [E1 ubiquitin-activating enzyme]-L-cysteine + S-ubiquitinyl-[E2 ubiquitin-conjugating enzyme]-L-cysteine.. Its pathway is protein modification; protein ubiquitination. Accepts the ubiquitin from the E1 complex and catalyzes its covalent attachment to other proteins. The polypeptide is Ubiquitin-conjugating enzyme E2 6 (UBC6) (Arabidopsis thaliana (Mouse-ear cress)).